We begin with the raw amino-acid sequence, 429 residues long: Histidine--tRNA ligase (429 aa).

Belongs to the class-II aminoacyl-tRNA synthetase family. As to quaternary structure, homodimer.

Its subcellular location is the cytoplasm. It catalyses the reaction tRNA(His) + L-histidine + ATP = L-histidyl-tRNA(His) + AMP + diphosphate + H(+). This Pseudomonas paraeruginosa (strain DSM 24068 / PA7) (Pseudomonas aeruginosa (strain PA7)) protein is Histidine--tRNA ligase.